Consider the following 186-residue polypeptide: Two-component response regulator ARR6 (186 aa).

In terms of domain architecture, Response regulatory spans 26–153; the sequence is HVLAVDDSHV…DVKRLRDSLM (128 aa). The residue at position 86 (Asp86) is a 4-aspartylphosphate.

The protein belongs to the ARR family. Type-A subfamily. In terms of processing, two-component system major event consists of a His-to-Asp phosphorelay between a sensor histidine kinase (HK) and a response regulator (RR). In plants, the His-to-Asp phosphorelay involves an additional intermediate named Histidine-containing phosphotransfer protein (HPt). This multistep phosphorelay consists of a His-Asp-His-Asp sequential transfer of a phosphate group between first a His and an Asp of the HK protein, followed by the transfer to a conserved His of the HPt protein and finally the transfer to an Asp in the receiver domain of the RR protein. In terms of tissue distribution, predominantly expressed in roots.

Its subcellular location is the nucleus. Functions as a response regulator involved in His-to-Asp phosphorelay signal transduction system. Phosphorylation of the Asp residue in the receiver domain activates the ability of the protein to promote the transcription of target genes. Type-A response regulators seem to act as negative regulators of the cytokinin signaling. The polypeptide is Two-component response regulator ARR6 (ARR6) (Arabidopsis thaliana (Mouse-ear cress)).